The sequence spans 1165 residues: Transient receptor potential cation channel subfamily M member 5 (1165 aa).

At 1-715 (MVEKSSERFD…LRRWNRFWSA (715 aa)) the chain is on the cytoplasmic side. S121 is modified (phosphoserine). Positions 212, 324, 333, 336, and 337 each coordinate Ca(2+). A helical membrane pass occupies residues 716–740 (PVTVFMGNVIMYFAFLILFSYVLLL). Residues 741-751 (DFRPPPPYGPS) are Extracellular-facing. Residues 752–771 (AAEIILYFWVFTLVLEEIRQ) traverse the membrane as a helical segment. Residues E768 and Q771 each coordinate Ca(2+). Over 772 to 792 (SFFTDEDMSILKKMKLYVEDN) the chain is Cytoplasmic. A helical transmembrane segment spans residues 793–811 (WNKCDMVAISLFVVGLSCR). Ca(2+) contacts are provided by N794 and D797. At 812–818 (MAMSTYE) the chain is on the extracellular side. The helical transmembrane segment at 819-841 (AGRTVLALDFMVFTLRLIHIFAI) threads the bilayer. Residues 842 to 850 (HKQLGPKII) lie on the Cytoplasmic side of the membrane. The helical transmembrane segment at 851-880 (IVERMIKDVFFFLFFLSVWLIAYGVTTQAL) threads the bilayer. Over 881–889 (LHPNDPRID) the chain is Extracellular. The pore-forming intramembrane region spans 890–930 (WVFRRALYRPYLHIFGQIPLEEIDAAKMPDDNCTTDVQEII). Positions 904–906 (FGQ) match the Selectivity filter motif. At 931–942 (LGTLPPCPNIYA) the chain is on the extracellular side. The chain crosses the membrane as a helical span at residues 943 to 977 (NWLVILLLVIYLLVTNVLLLNLLIAMFSYTFQVVQ). The Cytoplasmic portion of the chain corresponds to 978–1165 (ENADIFWKFQ…TDKKLPFIDH (188 aa)). E994 contributes to the Ca(2+) binding site. Residues 1122–1165 (RDAPKAPRSIAGSSRDQQPQGAKRQQPAGHPAYGTDKKLPFIDH) form a disordered region. Positions 1132 to 1141 (AGSSRDQQPQ) are enriched in polar residues. The segment covering 1156-1165 (TDKKLPFIDH) has biased composition (basic and acidic residues).

The protein belongs to the transient receptor (TC 1.A.4) family. LTrpC subfamily. TRPM5 sub-subfamily. As to quaternary structure, homotetramer.

Its subcellular location is the cell membrane. It carries out the reaction Na(+)(in) = Na(+)(out). The enzyme catalyses K(+)(in) = K(+)(out). With respect to regulation, ca(2+)-activated cation channel. Displays voltage dependence modulation. Regulated by PI(4,5)P2 levels. PI(4,5)P 2 reverses the Ca(2+) -induced desensitization of channels. Is highly temperature-sensitive. In terms of biological role, monovalent cation-selective ion channel activated by intracellular Ca(2+) in a voltage- and temperature-dependent manner. Mediates the transport of Na(+), K(+) and Cs(+) ions equally well. Activated directly by increase in intracellular Ca(2+), but is impermeable to it. The activation mechanism of TRPM5 involves a multistep process. TRPM5 activation involves ligand binding (i.e., tastant molecule, glucose stimulation) to Gq/G-protein coupled receptors (GPCR) and leads to the breakdown of phosphatidylinositol bisphosphate (PIP2) into diacylglycerol (DAG) and inositol trisphosphate (IP3), IP3 binds to its receptors in the endoplasmic reticulum and cause Ca(2+) release. Simultaneously with the intracellular Ca(2+) release, DAG activates the protein kinase C (PKC), which phosphorylates the TRPM5 channel. This phosphorylation combined with the bound Ca(2+), leads to a robust inward current allowing the entry of sodium ions (Na+) into the cell. This ion influx depolarizes the cell membrane, generating action potentials that propagate TRPM5 signals. In Danio rerio (Zebrafish), this protein is Transient receptor potential cation channel subfamily M member 5.